Here is a 210-residue protein sequence, read N- to C-terminus: Probable membrane protein MT1774 (210 aa).

2 consecutive transmembrane segments (helical) span residues 43–63 and 165–185; these read AVVM…AAAA and ALAA…LLAL.

The protein localises to the cell membrane. The protein is Probable membrane protein MT1774 of Mycobacterium tuberculosis (strain CDC 1551 / Oshkosh).